The primary structure comprises 101 residues: ATP synthase subunit c (101 aa).

2 helical membrane-spanning segments follow: residues 28-48 and 72-92; these read SVVA…VGMG and MFIA…IALI.

The protein belongs to the ATPase C chain family. F-type ATPases have 2 components, F(1) - the catalytic core - and F(0) - the membrane proton channel. F(1) has five subunits: alpha(3), beta(3), gamma(1), delta(1), epsilon(1). F(0) has three main subunits: a(1), b(2) and c(10-14). The alpha and beta chains form an alternating ring which encloses part of the gamma chain. F(1) is attached to F(0) by a central stalk formed by the gamma and epsilon chains, while a peripheral stalk is formed by the delta and b chains.

Its subcellular location is the cell inner membrane. F(1)F(0) ATP synthase produces ATP from ADP in the presence of a proton or sodium gradient. F-type ATPases consist of two structural domains, F(1) containing the extramembraneous catalytic core and F(0) containing the membrane proton channel, linked together by a central stalk and a peripheral stalk. During catalysis, ATP synthesis in the catalytic domain of F(1) is coupled via a rotary mechanism of the central stalk subunits to proton translocation. Functionally, key component of the F(0) channel; it plays a direct role in translocation across the membrane. A homomeric c-ring of between 10-14 subunits forms the central stalk rotor element with the F(1) delta and epsilon subunits. This chain is ATP synthase subunit c, found in Sulfurovum sp. (strain NBC37-1).